We begin with the raw amino-acid sequence, 323 residues long: rRNA 2'-O-methyltransferase fibrillarin (323 aa).

The segment at 1 to 80 (MGFERGGRGG…AKGGAAGKKV (80 aa)) is disordered. Asymmetric dimethylarginine is present on residues Arg5, Arg8, Arg12, Arg16, Arg23, Arg26, Arg30, Arg34, Arg41, Arg47, Arg49, Arg53, Arg57, Arg62, Arg64, and Arg68. The segment covering 8 to 76 (RGGARGGGRG…ARGGAKGGAA (69 aa)) has biased composition (gly residues). S-adenosyl-L-methionine-binding positions include 174-175 (TS), 193-194 (EF), 218-219 (DA), and 238-241 (DVAQ).

The protein belongs to the methyltransferase superfamily. Fibrillarin family. In terms of assembly, component of box C/D small nucleolar ribonucleoprotein (snoRNP) particles. By homology to other fibrillarins, some or all of the N-terminal domain arginines are modified to asymmetric dimethylarginine (DMA).

Its subcellular location is the nucleus. The protein localises to the nucleolus. The catalysed reaction is L-glutaminyl-[histone H2A] + S-adenosyl-L-methionine = N(5)-methyl-L-glutaminyl-[histone H2A] + S-adenosyl-L-homocysteine + H(+). S-adenosyl-L-methionine-dependent methyltransferase that has the ability to methylate both RNAs and proteins. Involved in pre-rRNA processing. Utilizes the methyl donor S-adenosyl-L-methionine to catalyze the site-specific 2'-hydroxyl methylation of ribose moieties in pre-ribosomal RNA. Site specificity is provided by a guide RNA that base pairs with the substrate. Methylation occurs at a characteristic distance from the sequence involved in base pairing with the guide RNA. Also acts as a protein methyltransferase by mediating methylation of 'Gln-105' of histone H2A (H2AQ105me), a modification that impairs binding of the FACT complex and is specifically present at 35S ribosomal DNA locus. This Neurospora crassa (strain ATCC 24698 / 74-OR23-1A / CBS 708.71 / DSM 1257 / FGSC 987) protein is rRNA 2'-O-methyltransferase fibrillarin (nop-1).